Here is a 446-residue protein sequence, read N- to C-terminus: Exodeoxyribonuclease 7 large subunit (446 aa).

It belongs to the XseA family. As to quaternary structure, heterooligomer composed of large and small subunits.

The protein resides in the cytoplasm. It carries out the reaction Exonucleolytic cleavage in either 5'- to 3'- or 3'- to 5'-direction to yield nucleoside 5'-phosphates.. Bidirectionally degrades single-stranded DNA into large acid-insoluble oligonucleotides, which are then degraded further into small acid-soluble oligonucleotides. In Vibrio cholerae serotype O1 (strain ATCC 39315 / El Tor Inaba N16961), this protein is Exodeoxyribonuclease 7 large subunit.